Here is a 199-residue protein sequence, read N- to C-terminus: uncharacterized protein (199 aa).

6 consecutive transmembrane segments (helical) span residues 1–21 (MEQF…TFIF), 28–48 (IAVS…IALY), 51–71 (LNAA…YLGM), 83–103 (LVAA…WFII), 127–147 (QLVL…FVIQ), and 154–174 (AVGG…LFGI).

Its subcellular location is the cell membrane. This is an uncharacterized protein from Bacillus subtilis (strain 168).